A 159-amino-acid chain; its full sequence is Thymic stromal lymphopoietin (159 aa).

An N-terminal signal peptide occupies residues 1–28 (MFPFALLYVLSVSFRKIFILQLVGLVLT). Cystine bridges form between Cys34-Cys110, Cys69-Cys75, and Cys90-Cys137. An N-linked (GlcNAc...) asparagine glycan is attached at Asn64. Asn119 carries an N-linked (GlcNAc...) asparagine glycan.

In terms of assembly, interacts with a receptor composed of CRLF2 and IL7R. Binding of TSLP to CRLF2/TSLPR is a mechanistic prerequisite for recruitment of IL7R to the high-affinity ternary complex. Isoform 1 is expressed in a number of tissues including heart, liver and prostate. Isoform 2 is the predominant form in keratinocytes of oral mucosa, skin and in salivary glands. It is secreted into saliva.

The protein localises to the secreted. In terms of biological role, cytokine that induces the release of T-cell-attracting chemokines from monocytes and, in particular, enhances the maturation of CD11c(+) dendritic cells. Can induce allergic inflammation by directly activating mast cells. Functionally, may act as an antimicrobial peptide in the oral cavity and on the skin. This chain is Thymic stromal lymphopoietin (TSLP), found in Homo sapiens (Human).